The following is a 209-amino-acid chain: Ribosomal RNA small subunit methyltransferase G (209 aa).

S-adenosyl-L-methionine contacts are provided by residues G72, L77, 123–124 (AE), and R138.

This sequence belongs to the methyltransferase superfamily. RNA methyltransferase RsmG family.

The protein resides in the cytoplasm. Functionally, specifically methylates the N7 position of guanine in position 518 of 16S rRNA. The polypeptide is Ribosomal RNA small subunit methyltransferase G (Leifsonia xyli subsp. xyli (strain CTCB07)).